A 658-amino-acid polypeptide reads, in one-letter code: ATP-dependent RNA helicase DDX3Y (658 aa).

Over residues 1–10 (MSHVVVKNDP) the composition is skewed to basic and acidic residues. The segment at 1-141 (MSHVVVKNDP…DDWSKPLPPS (141 aa)) is disordered. Ser2 is modified (N-acetylserine). The segment covering 15-34 (QLANLDLNSEKQSGGASTAS) has biased composition (polar residues). Residues 44 to 68 (RNREASKGFHDKDSSGWSCSKDKDA) show a composition bias toward basic and acidic residues. An N6-acetyllysine modification is found at Lys55. Phosphoserine is present on residues Ser81, Ser85, and Ser89. A compositionally biased stretch (basic and acidic residues) spans 93–128 (GRFDDRGRSDYDGIGNRDRPGFGRFERSGHSRWCDK). At Arg100 the chain carries Omega-N-methylarginine. At Ser101 the chain carries Phosphoserine. Phosphotyrosine is present on Tyr103. An Omega-N-methylarginine modification is found at Arg109. Phosphoserine occurs at positions 129 and 181. Positions 178-206 (ENFSDIDMGEIIMGNIELTRYTRPTPVQK) match the Q motif motif. Residue 198–205 (YTRPTPVQ) participates in ATP binding. Residues 209–401 (IPIIKGKRDL…RDFLDEYIFL (193 aa)) form the Helicase ATP-binding domain. Lys213 is covalently cross-linked (Glycyl lysine isopeptide (Lys-Gly) (interchain with G-Cter in SUMO2)). Residue 222-229 (AQTGSGKT) participates in ATP binding. The short motif at 345 to 348 (DEAD) is the DEAD box element. The region spanning 412–573 (NITQKVVWVE…EVPSWLENMA (162 aa)) is the Helicase C-terminal domain. Ser454 bears the Phosphoserine mark. Arg588 carries the omega-N-methylarginine modification. Ser590 and Ser601 each carry phosphoserine. Positions 597–625 (DYRQSSGSSSSGFGASRGSSSRSGGSGYG) are disordered. Positions 601–619 (SSGSSSSGFGASRGSSSRS) are enriched in low complexity. Arg613 and Arg628 each carry omega-N-methylarginine.

Belongs to the DEAD box helicase family. DDX3/DED1 subfamily. May interact with TDRD3.

The protein localises to the cytoplasm. It is found in the nucleus. It catalyses the reaction ATP + H2O = ADP + phosphate + H(+). Probable ATP-dependent RNA helicase. May play a role in spermatogenesis. The polypeptide is ATP-dependent RNA helicase DDX3Y (DDX3Y) (Pongo abelii (Sumatran orangutan)).